A 110-amino-acid polypeptide reads, in one-letter code: Insulin (110 aa).

The N-terminal stretch at 1 to 24 (MALWTRLLPLLALLALLGPDPAQA) is a signal peptide. 3 cysteine pairs are disulfide-bonded: C31–C96, C43–C109, and C95–C100. Residues 57–87 (EVEEQQGGQVELGGGPGAGLPQPLALEMALQ) constitute a propeptide, c peptide.

The protein belongs to the insulin family. Heterodimer of a B chain and an A chain linked by two disulfide bonds.

The protein localises to the secreted. Functionally, insulin decreases blood glucose concentration. It increases cell permeability to monosaccharides, amino acids and fatty acids. It accelerates glycolysis, the pentose phosphate cycle, and glycogen synthesis in liver. The polypeptide is Insulin (INS) (Ictidomys tridecemlineatus (Thirteen-lined ground squirrel)).